Here is a 215-residue protein sequence, read N- to C-terminus: Small ribosomal subunit protein uS3 (215 aa).

The KH type-2 domain maps to 39–107 (VRQYLQKKLA…PVHINIEEIR (69 aa)).

The protein belongs to the universal ribosomal protein uS3 family. Part of the 30S ribosomal subunit. Forms a tight complex with proteins S10 and S14.

Binds the lower part of the 30S subunit head. Binds mRNA in the 70S ribosome, positioning it for translation. The polypeptide is Small ribosomal subunit protein uS3 (Nitrosomonas europaea (strain ATCC 19718 / CIP 103999 / KCTC 2705 / NBRC 14298)).